The sequence spans 137 residues: Nucleoside diphosphate kinase (137 aa).

The ATP site is built by K10, F59, R87, T93, R104, and N114. H117 acts as the Pros-phosphohistidine intermediate in catalysis.

This sequence belongs to the NDK family. Homotetramer. Requires Mg(2+) as cofactor.

It is found in the cytoplasm. It carries out the reaction a 2'-deoxyribonucleoside 5'-diphosphate + ATP = a 2'-deoxyribonucleoside 5'-triphosphate + ADP. The catalysed reaction is a ribonucleoside 5'-diphosphate + ATP = a ribonucleoside 5'-triphosphate + ADP. Major role in the synthesis of nucleoside triphosphates other than ATP. The ATP gamma phosphate is transferred to the NDP beta phosphate via a ping-pong mechanism, using a phosphorylated active-site intermediate. The chain is Nucleoside diphosphate kinase from Streptomyces coelicolor (strain ATCC BAA-471 / A3(2) / M145).